Reading from the N-terminus, the 67-residue chain is MKPDEIRKMTKEERLRRLNELRLELIKLRMQARVGTLTNTARIRNIKRDIARILTIMREEELGISRK.

This sequence belongs to the universal ribosomal protein uL29 family.

The sequence is that of Large ribosomal subunit protein uL29 from Staphylothermus marinus (strain ATCC 43588 / DSM 3639 / JCM 9404 / F1).